Reading from the N-terminus, the 676-residue chain is MAEFRVRVSTGEAFGAGTWDKVSVSIVGTRGESPPLPLDNLGKEFTAGAEEDFQVTLPEDVGRVLLLRVHKAPPVLPLLGPLAPDAWFCRWFQLTPPRGGHLLFPCYQWLEGAGTLVLQEGTAKVSWADHHPVLQQQRQEELQARQEMYQWKAYNPGWPHCLDEKTVEDLELNIKYSTAKNANFYLQAGSAFAEMKIKGLLDRKGLWRSLNEMKRIFNFRRTPAAEHAFEHWQEDAFFASQFLNGLNPVLIRRCHYLPKNFPVTDAMVASVLGPGTSLQAELEKGSLFLVDHGILSGIQTNVINGKPQFSAAPMTLLYQSPGCGPLLPLAIQLSQTPGPNSPIFLPTDDKWDWLLAKTWVRNAEFSFHEALTHLLHSHLLPEVFTLATLRQLPHCHPLFKLLIPHTRYTLHINTLARELLIVPGQVVDRSTGIGIEGFSELIQRNMKQLNYSLLCLPEDIRTRGVEDIPGYYYRDDGMQIWGAVERFVSEIIGIYYPSDESVQDDRELQAWVREIFSKGFLNQESSGIPSSLETREALVQYVTMVIFTCSAKHAAVSAGQFDSCAWMPNLPPSMQLPPPTSKGLATCEGFIATLPPVNATCDVILALWLLSKEPGDQRPLGTYPDEHFTEEAPRRSIATFQSRLAQISRGIQERNQGLVLPYTYLDPPLIENSVSI.

In terms of domain architecture, PLAT spans 2–124; that stretch reads AEFRVRVSTG…TLVLQEGTAK (123 aa). 8 residues coordinate Ca(2+): G15, G17, D39, N40, G42, E44, D85, and A86. Residues 125–676 form the Lipoxygenase domain; it reads VSWADHHPVL…PPLIENSVSI (552 aa). 4 residues coordinate Fe cation: H373, H378, H553, and I676.

The protein belongs to the lipoxygenase family. Fe cation is required as a cofactor. Expressed in hair, prostate, lung, ovary, lymph node, spinal cord and cornea.

The protein localises to the nucleus. It localises to the cytoplasm. It is found in the cytosol. The protein resides in the cell membrane. Its subcellular location is the cytoskeleton. The protein localises to the membrane. It localises to the cell junction. It is found in the adherens junction. The protein resides in the focal adhesion. The enzyme catalyses (5Z,8Z,11Z,14Z)-eicosatetraenoate + O2 = (15S)-hydroperoxy-(5Z,8Z,11Z,13E)-eicosatetraenoate. It catalyses the reaction (9Z,12Z)-octadecadienoate + O2 = 13-hydroperoxy-(9Z,11E)-octadecadienoate. It carries out the reaction (5S)-hydroxy-(6E,8Z,11Z,14Z)-eicosatetraenoate + O2 = (5S)-hydroxy-(15S)-hydroperoxy-(6E,8Z,11Z,13E)-eicosatetraenoate. The catalysed reaction is (5Z,8Z,11Z,14Z)-eicosatetraenoate + O2 = 5-hydroperoxy-(6E,8Z,11Z,14Z)-eicosatetraenoate. The enzyme catalyses (5S,6R)-dihydroxy-(7E,9E,11Z,14Z)-eicosatetraenoate + O2 = (5S,6R)-dihydroxy-(15S)-hydroperoxy-(7E,9E,11Z,13E)-eicosatetraenoate. It catalyses the reaction (5S)-hydroperoxy-(6E,8Z,11Z,14Z)-eicosatetraenoate + O2 = (5S,15S)-dihydroperoxy-(6E,8Z,11Z,13E)-eicosatetraenoate. It carries out the reaction 2-(5Z,8Z,11Z,14Z-eicosatetraenoyl)-glycerol + O2 = 2-[15(S)-hydroperoxy-(5Z,8Z,11Z,13E)-eicosatetraenoyl]-glycerol. The catalysed reaction is (8S)-hydroperoxy-(5Z,9E,11Z,14Z)-eicosatetraenoate + O2 = (8S,15S)-dihydroperoxy-(5Z,9E,11Z,13E)-eicosatetraenoate. The enzyme catalyses N-(5Z,8Z,11Z,14Z)-eicosatetraenoyl-L-alanine + O2 = N-(15S)-hydroperoxy-(5Z,8Z,11Z,13E)-eicosatetraenoyl-alanine. It catalyses the reaction N-(5Z,8Z,11Z,14Z)-eicosatetraenoyl-gamma-aminobutanoate + O2 = N-(15S)-hydroperoxy-(5Z,8Z,11Z,13E)-eicosatetraenoyl-gamma-aminobutanoate. It carries out the reaction N-(5Z,8Z,11Z,14Z)-eicosatetraenoyl-glycine + O2 = N-(15S)-hydroperoxy-(5Z,8Z,11Z,13E)-eicosatetraenoyl-glycine. The catalysed reaction is N-(5Z,8Z,11Z,14Z)-eicosatetraenoyl-taurine + O2 = N-(15S)-hydroperoxy-(5Z,8Z,11Z,13E)-eicosatetraenoyl-taurine. The enzyme catalyses 2-(5Z,8Z,11Z,14Z-eicosatetraenoyl)-glycerol + O2 = 2-[12-hydroperoxy-(5Z,8Z,10E,14Z)-eicosatetraenoyl]-glycerol. It catalyses the reaction 1-octadecanoyl-2-(5Z,8Z,11Z,14Z-eicosatetraenoyl)-sn-glycero-3-phosphocholine + O2 = 1-octadecanoyl-2-(15-hydroperoxy-5Z,8Z,11Z,13E-eicosatetraenoyl)-sn-glycero-3-phosphocholine. It carries out the reaction a 1-acyl-2-(5Z,8Z,11Z,14Z-eicosatetraenoyl)-sn-glycero-3-phospho-(1D-myo-inositol) + O2 = a 1-acyl-2-(15-hydroperoxy-5Z,8Z,11Z,13E-eicosatetraenoyl)-sn-glycero-3-phospho-(1D-myo-inositol). The catalysed reaction is a 1-acyl-2-(8Z,11Z,14Z-eicosatrienoyl)-sn-glycero-3-phospho-(1D-myo-inositol) + O2 = a 1-acyl-2-(15-hydroperoxy-8Z,11Z,13E-eicosatrienoyl)-sn-glycero-3-phospho-(1D-myo-inositol). The enzyme catalyses 1-octadecanoyl-2-(5Z,8Z,11Z,14Z)-eicosatetraenoyl-sn-glycero-3-phosphoethanolamine + O2 = 1-octadecanoyl-2-(15-hydroperoxy-5Z,8Z,11Z,13E-eicosatetraenoyl)-sn-glycero-3-phosphoethanolamine. It catalyses the reaction 1-octadecanoyl-2-(5Z,8Z,11Z,14Z-eicosatetraenoyl)-sn-glycero-3-phospho-(1D-myo-inositol) + O2 = 1-octadecanoyl-2-(15-hydroperoxy-5Z,8Z,11Z,13E-eicosatetraenoyl)-sn-glycero-3-phospho-(1D-myo-inositol). It carries out the reaction (8Z,11Z,14Z)-eicosatrienoate + O2 = 15-hydroperoxy-(8Z,11Z,13E)-eicosatrienoate. The catalysed reaction is (7S)-hydroperoxy-(4Z,8E,10Z,13Z,16Z,19Z)-docosahexaenoate + O2 = (7S,17S)-dihydroperoxy-(4Z,8E,10Z,13Z,15E,19Z)-docosahexaenoate. The enzyme catalyses (5Z,8Z,11Z,14Z)-eicosatetraenoate + O2 = 15-hydroperoxy-(5Z,8Z,11Z,13E)-eicosatetraenoate. It participates in lipid metabolism; hydroperoxy eicosatetraenoic acid biosynthesis. Functionally, non-heme iron-containing dioxygenase that catalyzes the stereo-specific peroxidation of free and esterified polyunsaturated fatty acids (PUFAs) generating a spectrum of bioactive lipid mediators. It inserts peroxyl groups at C15 of arachidonate ((5Z,8Z,11Z,14Z)-eicosatetraenoate) producing (15S)-hydroperoxyeicosatetraenoate/(15S)-HPETE. Also peroxidizes linoleate ((9Z,12Z)-octadecadienoate) to 13-hydroperoxyoctadecadienoate/13-HPODE. Oxygenates arachidonyl derivatives such as 2-arachidonoylglycerol (2-AG) leading to the production and extracellular release of 15-hydroxyeicosatetraenoyl glycerol (15-HETE-G) that acts as a peroxisome proliferator-activated receptor alpha agonist. Has the ability to efficiently class-switch ALOX5 pro-inflammatory mediators into anti-inflammatory intermediates. Participates in the sequential oxidations of DHA ((4Z,7Z,10Z,13Z,16Z,19Z)-docosahexaenoate) to generate specialized pro-resolving mediators (SPMs) resolvin D5 ((7S,17S)-diHPDHA), which can actively down-regulate the immune response and have anti-aggregation properties with platelets. In addition to free PUFAs hydrolyzed from phospholipids, it directly oxidizes PUFAs esterified to membrane-bound phospholipids. Has no detectable 8S-lipoxygenase activity on arachidonate but reacts with (8S)-HPETE to produce (8S,15S)-diHPETE. May regulate progression through the cell cycle and cell proliferation. May also regulate cytokine secretion by macrophages and therefore play a role in the immune response. May also regulate macrophage differentiation into proatherogenic foam cells. Does not convert arachidonic acid to 15S-hydroperoxyeicosatetraenoic acid/(15S)-HPETE. This chain is Polyunsaturated fatty acid lipoxygenase ALOX15B, found in Homo sapiens (Human).